The sequence spans 118 residues: Large ribosomal subunit protein uL18 (118 aa).

Belongs to the universal ribosomal protein uL18 family. Part of the 50S ribosomal subunit; part of the 5S rRNA/L5/L18/L25 subcomplex. Contacts the 5S and 23S rRNAs.

In terms of biological role, this is one of the proteins that bind and probably mediate the attachment of the 5S RNA into the large ribosomal subunit, where it forms part of the central protuberance. The polypeptide is Large ribosomal subunit protein uL18 (Sulfurimonas denitrificans (strain ATCC 33889 / DSM 1251) (Thiomicrospira denitrificans (strain ATCC 33889 / DSM 1251))).